The primary structure comprises 412 residues: Putative competence-damage inducible protein (412 aa).

It belongs to the CinA family.

The protein is Putative competence-damage inducible protein of Clostridium perfringens (strain 13 / Type A).